Reading from the N-terminus, the 149-residue chain is Hydroalkoxylation enzyme phnH (149 aa).

The N-terminal stretch at 1-18 is a signal peptide; the sequence is MKFTYLVSLAAFAVTALG. N-linked (GlcNAc...) asparagine glycans are attached at residues Asn-33 and Asn-127.

Homotetramer.

It carries out the reaction 2,4,7,9-tetrahydroxy-6-methyl-8-(2-methylbut-3-en-2-yl)-1-oxo-1H-phenalen-3-ol = (2'R)-atrovenetin. The protein operates within secondary metabolite biosynthesis. Hydroalkoxylation enzyme; part of the gene cluster that mediates the biosynthesis of phenalenones such as herqueinone, compounds that have been reported to treat tumors, bacterial infections and/or mycoses, and rheumatic diseases. The non-reducing polyketide synthase phnA synthesizes the heptaketide backbone and cyclizes it into the angular, hemiketal-containing naphtho-gamma-pyrone prephenalenone. The product template (PT) domain of phnA catalyzes only the C4-C9 aldol condensation, which is unprecedented among known PT domains. The transformation of prephenalenone to phenalenones requires an FAD-dependent monooxygenase phnB, which catalyzes the C2 aromatic hydroxylation of prephenalenone and ring opening of the gamma-pyrone ring simultaneously. Subsequent intramolecular deprotonation of C3 phenolic oxygen accelerates phenalenone ring closure to yield the tricyclic phenalenone core with a C2 hydroxylation. The prenyltransferase phnF further catalyzes reverse C-prenylation of phenalenone by direct electrophilic substitution at C6, or possibly via first a forward O-prenylation of a neighboring phenol in phenalenone, followed by a Claisen rearrangement. The hydroalkoxylation enzyme phnH catalyzes the 5-exo-trig cyclization via acid catalysis after the spontaneous deprotonation of 7-OH, which leads to the formation of the dihydrobenzofuran atrovenetin. Atrovenetin is further converted to deoxyherqueinone by the O-methyltransferase phnC which can methylate C2-OH to stabilize the northern portion of the phenalenone core. Finally, the oxidoreductase phnG converts deoxyherqueinone to herqueinone via C6 hydroxylation. The protein is Hydroalkoxylation enzyme phnH of Penicillium herquei.